Consider the following 159-residue polypeptide: Vesicle transport protein SFT2A (159 aa).

At 1 to 36 the chain is on the cytoplasmic side; sequence MEKLRRVLSGQDDEEQGLTAQVLDASSLSFNTRLKW. The residue at position 9 (Ser-9) is a Phosphoserine. A helical membrane pass occupies residues 37 to 57; it reads FVICFVAGIFFSFLGTGLLWL. Topologically, residues 58 to 62 are lumenal; sequence PNGMK. The chain crosses the membrane as a helical span at residues 63–83; that stretch reads LFAVFYTLGNLAALASTCFLM. At 84-97 the chain is on the cytoplasmic side; it reads GPVKQLKKMFETTR. The chain crosses the membrane as a helical span at residues 98 to 118; sequence LLATIIMLLCLVFTLCAALWW. The Lumenal portion of the chain corresponds to 119–122; the sequence is RKKG. The helical transmembrane segment at 123-143 threads the bilayer; sequence LALLFCILQFLSMTWYSLSYI. At 144–159 the chain is on the cytoplasmic side; it reads PYARDAVLKCCSSLLG.

It belongs to the SFT2 family.

It localises to the membrane. In terms of biological role, may be involved in fusion of retrograde transport vesicles derived from an endocytic compartment with the Golgi complex. In Mus musculus (Mouse), this protein is Vesicle transport protein SFT2A.